The sequence spans 64 residues: Large ribosomal subunit protein bL35 (64 aa).

A compositionally biased stretch (basic residues) spans 1–45 (MPKMKTHKGAAKRFKKTGKGKIKRRKAFKSHILTKKTPKRKRNLR). The segment at 1-64 (MPKMKTHKGA…EEKRIKRLLP (64 aa)) is disordered.

Belongs to the bacterial ribosomal protein bL35 family.

The chain is Large ribosomal subunit protein bL35 from Natranaerobius thermophilus (strain ATCC BAA-1301 / DSM 18059 / JW/NM-WN-LF).